The following is a 274-amino-acid chain: Copper chaperone for superoxide dismutase (274 aa).

In terms of domain architecture, HMA spans leucine 11–valine 74. Residues cysteine 22 and cysteine 25 each coordinate Cu cation. Lysine 76 participates in a covalent cross-link: Glycyl lysine isopeptide (Lys-Gly) (interchain with G-Cter in ubiquitin). A superoxide dismutase-like region spans residues alanine 88–alanine 234. A disulfide bridge connects residues cysteine 141 and cysteine 227. Zn(2+) contacts are provided by histidine 147, histidine 155, histidine 164, and aspartate 167. Residues lysine 189, lysine 216, and lysine 241 each participate in a glycyl lysine isopeptide (Lys-Gly) (interchain with G-Cter in ubiquitin) cross-link. 2 residues coordinate Cu cation: cysteine 244 and cysteine 246. Serine 267 carries the phosphoserine modification.

The protein in the C-terminal section; belongs to the Cu-Zn superoxide dismutase family. As to quaternary structure, homodimer, and heterodimer with SOD1. Interacts with COMMD1. Interacts with XIAP/BIRC4. Interacts with SLC31A1(via C-terminal domain); this interaction is Cu(1+)-mediated. The heterodimer CCS:SOD1 interacts with SLC31A1; this heterotrimer is Cu(1+)-mediated and its maintenance is regulated through SOD1 activation. Requires Cu(2+) as cofactor. Zn(2+) is required as a cofactor. Ubiquitinion by XIAP/BIRC4 leads to enhancement of its chaperone activity toward its physiologic target, SOD1, rather than proteasomal degradation. XIAP/BIRC4 preferentially ubiquitinates at Lys-241. Ubiquitous.

The protein localises to the cytoplasm. Delivers copper to copper zinc superoxide dismutase (SOD1). In Homo sapiens (Human), this protein is Copper chaperone for superoxide dismutase.